Consider the following 213-residue polypeptide: NADH-quinone oxidoreductase subunit B (213 aa).

4 residues coordinate [4Fe-4S] cluster: C38, C39, C104, and C133. The interval 172–213 is disordered; it reads IMPENTNRFPGQLEKPKTSTLTLEAPDADDAEEASTPEPVAA. The span at 197 to 206 shows a compositional bias: acidic residues; it reads PDADDAEEAS.

Belongs to the complex I 20 kDa subunit family. In terms of assembly, NDH-1 is composed of 14 different subunits. Subunits NuoB, C, D, E, F, and G constitute the peripheral sector of the complex. It depends on [4Fe-4S] cluster as a cofactor.

The protein localises to the cell inner membrane. It carries out the reaction a quinone + NADH + 5 H(+)(in) = a quinol + NAD(+) + 4 H(+)(out). NDH-1 shuttles electrons from NADH, via FMN and iron-sulfur (Fe-S) centers, to quinones in the respiratory chain. The immediate electron acceptor for the enzyme in this species is believed to be a menaquinone. Couples the redox reaction to proton translocation (for every two electrons transferred, four hydrogen ions are translocated across the cytoplasmic membrane), and thus conserves the redox energy in a proton gradient. The sequence is that of NADH-quinone oxidoreductase subunit B (nuoB) from Salinibacter ruber (strain DSM 13855 / M31).